Here is a 552-residue protein sequence, read N- to C-terminus: Urocanate hydratase (552 aa).

Residues 49–50 (GG), Q127, 173–175 (GMG), E193, R198, 239–240 (NA), 260–264 (QTSAH), 270–271 (YI), and Y319 contribute to the NAD(+) site. The active site involves C407. G489 contributes to the NAD(+) binding site.

The protein belongs to the urocanase family. Requires NAD(+) as cofactor.

The protein resides in the cytoplasm. It carries out the reaction 4-imidazolone-5-propanoate = trans-urocanate + H2O. It functions in the pathway amino-acid degradation; L-histidine degradation into L-glutamate; N-formimidoyl-L-glutamate from L-histidine: step 2/3. Its function is as follows. Catalyzes the conversion of urocanate to 4-imidazolone-5-propionate. In Geobacillus sp. (strain WCH70), this protein is Urocanate hydratase.